A 458-amino-acid chain; its full sequence is Flavonol 3-O-glucosyltransferase F3GT2 (458 aa).

The Proton acceptor role is filled by H20. H20 contacts an anthocyanidin. The active-site Charge relay is the D119. T141 is a binding site for UDP-alpha-D-glucose. H150 serves as a coordination point for an anthocyanidin. Positions 333, 335, 350, 353, 354, 355, and 358 each coordinate UDP-alpha-D-glucose. An an anthocyanidin-binding site is contributed by G373. UDP-alpha-D-glucose is bound by residues D374 and Q375.

This sequence belongs to the UDP-glycosyltransferase family. As to expression, expressed in ovaries.

The enzyme catalyses a flavonol + UDP-alpha-D-glucose = a flavonol 3-O-beta-D-glucoside + UDP + H(+). It participates in flavonoid metabolism. Catalyzes the glucosylation of quercetin. Preferentially uses UDP-glucose as sugar donor, but is also able to use UDP-gal and UDP-xyl. Is probably not required for the accumulation of anthocyanin in red-fleshed kiwifruit varieties. The sequence is that of Flavonol 3-O-glucosyltransferase F3GT2 from Actinidia chinensis var. chinensis (Chinese soft-hair kiwi).